Reading from the N-terminus, the 255-residue chain is NAD kinase (255 aa).

Catalysis depends on Asp44, which acts as the Proton acceptor. NAD(+)-binding positions include 44–45, His49, 114–115, Asp144, Ala152, 155–160, and Gln216; these read DG, NE, and SAYNLS.

This sequence belongs to the NAD kinase family. A divalent metal cation serves as cofactor.

The protein resides in the cytoplasm. The catalysed reaction is NAD(+) + ATP = ADP + NADP(+) + H(+). Its function is as follows. Involved in the regulation of the intracellular balance of NAD and NADP, and is a key enzyme in the biosynthesis of NADP. Catalyzes specifically the phosphorylation on 2'-hydroxyl of the adenosine moiety of NAD to yield NADP. This chain is NAD kinase, found in Rickettsia peacockii (strain Rustic).